The primary structure comprises 227 residues: MGQKVNPVGIRLGIVKDHNSVWYADKKNYSDHLLTDIKVREFLMKKLEKASVSKVIIERPPQNAKITIHTARPGIVIGKKGEDVDRLRQEVGELMKVPVHINIEEIRKPDLDAKLVASGVAGQLERRVMFRRAMKRAVQNAMRQGAKGIKIQVGGRLGGAEIARTEWYREGRVPLHTLRADIDYATHEAHTTYGVIGVKVWIFKGEILGGIEQVRAEKKAAKKKSSK.

Positions 39 to 107 (VREFLMKKLE…PVHINIEEIR (69 aa)) constitute a KH type-2 domain.

Belongs to the universal ribosomal protein uS3 family. In terms of assembly, part of the 30S ribosomal subunit. Forms a tight complex with proteins S10 and S14.

Binds the lower part of the 30S subunit head. Binds mRNA in the 70S ribosome, positioning it for translation. This Hahella chejuensis (strain KCTC 2396) protein is Small ribosomal subunit protein uS3.